Reading from the N-terminus, the 117-residue chain is Peptidyl-tRNA hydrolase (117 aa).

The protein belongs to the PTH2 family.

Its subcellular location is the cytoplasm. It catalyses the reaction an N-acyl-L-alpha-aminoacyl-tRNA + H2O = an N-acyl-L-amino acid + a tRNA + H(+). In terms of biological role, the natural substrate for this enzyme may be peptidyl-tRNAs which drop off the ribosome during protein synthesis. The polypeptide is Peptidyl-tRNA hydrolase (Metallosphaera sedula (strain ATCC 51363 / DSM 5348 / JCM 9185 / NBRC 15509 / TH2)).